The chain runs to 510 residues: NAD(P)H-quinone oxidoreductase subunit 2 B, chloroplastic (510 aa).

The next 13 membrane-spanning stretches (helical) occupy residues 24–44, 57–77, 99–119, 124–144, 149–169, 183–203, 227–247, 295–315, 323–343, 354–374, 395–415, 428–448, and 484–504; these read LLLFDGSFIFPECILIFGLIL, IPWFYFISSTSLVMSITALLF, IFQFLILLCSTLCIPLSVEYI, MAITEFLLFVLTATLGGMFLC, LITIFVAPECFSLCSYLLSGY, YLLMGGASSSILVHGFSWLYG, PGILIALLFITVGIGFKLSLA, WHLLLEILAILSMILGNLIAI, MLAYSSIGQIGYVIIGIIVGD, YMLFYISMNLGTFACIVLFGL, ALSLALCLLSLGGLPPLAGFF, GLYFLVSIGLLTSVISIYYYL, and MIVCVIASTIPGISMNPIIAI.

This sequence belongs to the complex I subunit 2 family. As to quaternary structure, NDH is composed of at least 16 different subunits, 5 of which are encoded in the nucleus.

Its subcellular location is the plastid. The protein localises to the chloroplast thylakoid membrane. It carries out the reaction a plastoquinone + NADH + (n+1) H(+)(in) = a plastoquinol + NAD(+) + n H(+)(out). The catalysed reaction is a plastoquinone + NADPH + (n+1) H(+)(in) = a plastoquinol + NADP(+) + n H(+)(out). In terms of biological role, NDH shuttles electrons from NAD(P)H:plastoquinone, via FMN and iron-sulfur (Fe-S) centers, to quinones in the photosynthetic chain and possibly in a chloroplast respiratory chain. The immediate electron acceptor for the enzyme in this species is believed to be plastoquinone. Couples the redox reaction to proton translocation, and thus conserves the redox energy in a proton gradient. This Eucalyptus globulus subsp. globulus (Tasmanian blue gum) protein is NAD(P)H-quinone oxidoreductase subunit 2 B, chloroplastic.